The following is a 373-amino-acid chain: Histone-lysine N-methyltransferase SETD7 (373 aa).

Positions 1–20 (MDSDDDNMEEVVEGPLDEDD) are disordered. MORN repeat units lie at residues 36-58 (FEGHFVHGEKNGKGKFFFFDGST), 59-81 (LEGFYVDDALQGQGVYTYEDGGA), and 106-128 (FRGRYKDNIRYGMCWVYYPDGAC). The SET domain maps to 214 to 336 (QRVYVGQSLI…KDEELTVAYG (123 aa)). S-adenosyl-L-methionine-binding positions include 226–228 (AGE), Asn296, and His297.

The protein belongs to the class V-like SAM-binding methyltransferase superfamily. Histone-lysine methyltransferase family. SET7 subfamily.

It is found in the nucleus. The protein localises to the chromosome. It carries out the reaction L-lysyl(4)-[histone H3] + S-adenosyl-L-methionine = N(6)-methyl-L-lysyl(4)-[histone H3] + S-adenosyl-L-homocysteine + H(+). The catalysed reaction is L-lysyl-[protein] + S-adenosyl-L-methionine = N(6)-methyl-L-lysyl-[protein] + S-adenosyl-L-homocysteine + H(+). In terms of biological role, histone methyltransferase that specifically monomethylates 'Lys-4' of histone H3. H3 'Lys-4' methylation represents a specific tag for epigenetic transcriptional activation. Plays a central role in the transcriptional activation of genes. Also has methyltransferase activity toward non-histone proteins. In Danio rerio (Zebrafish), this protein is Histone-lysine N-methyltransferase SETD7 (setd7).